Here is a 552-residue protein sequence, read N- to C-terminus: Gamma-aminobutyric acid receptor subunit alpha-4 (552 aa).

An N-terminal signal peptide occupies residues 1 to 35; it reads MVSVQKVPAIALCSGVSLALLHFLCLAACLNESPG. Residues 36–259 lie on the Extracellular side of the membrane; sequence QNSKDEKLCP…FHLRRKMGYF (224 aa). Asparagine 47 carries N-linked (GlcNAc...) asparagine glycosylation. Position 100 (arginine 100) interacts with 4-aminobutanoate. Asparagine 144 and asparagine 157 each carry an N-linked (GlcNAc...) asparagine glycan. Threonine 163 serves as a coordination point for 4-aminobutanoate. Cysteine 172 and cysteine 186 are joined by a disulfide. A helical transmembrane segment spans residues 260-280; sequence MIQTYIPCIMTVILSQVSFWI. The Cytoplasmic segment spans residues 281-284; sequence NKES. A helical transmembrane segment spans residues 285 to 305; sequence VPARTVFGITTVLTMTTLSIS. Residues 306 to 318 are Extracellular-facing; it reads ARHSLPKVSYATA. A helical transmembrane segment spans residues 319–341; the sequence is MDWFIAVCFAFVFSALIEFAAVN. Topologically, residues 342–515 are cytoplasmic; sequence YFTNIQMQKA…PPPSGSGTSK (174 aa). Disordered stretches follow at residues 353–480 and 492–513; these read KKIS…FGSR and GAAGNVSATPPPPAPPPSGSGT. Residues 396–406 are compositionally biased toward basic and acidic residues; the sequence is SESDVKSRTEV. Residues 407-422 show a composition bias toward polar residues; that stretch reads GNHSSKTSAVQESSEA. Positions 445–458 are enriched in low complexity; sequence SAAARGLSSAASPS. Pro residues predominate over residues 500–509; that stretch reads TPPPPAPPPS. The helical transmembrane segment at 516–538 threads the bilayer; the sequence is IDKYARILFPVTFGAFNMVYWVV. The Extracellular portion of the chain corresponds to 539-552; the sequence is YLSKDTMEKSESLM.

This sequence belongs to the ligand-gated ion channel (TC 1.A.9) family. Gamma-aminobutyric acid receptor (TC 1.A.9.5) subfamily. GABRA4 sub-subfamily. As to quaternary structure, heteropentamer, formed by a combination of alpha (GABRA1-6), beta (GABRB1-3), gamma (GABRG1-3), delta (GABRD), epsilon (GABRE), rho (GABRR1-3), pi (GABRP) and theta (GABRQ) chains, each subunit exhibiting distinct physiological and pharmacological properties. Expressed in the brain.

Its subcellular location is the cell membrane. The protein resides in the postsynaptic cell membrane. The catalysed reaction is chloride(in) = chloride(out). Its activity is regulated as follows. Potentiated by gaboxadol. Potentiated by histamine. Its function is as follows. Alpha subunit of the heteropentameric ligand-gated chloride channel gated by gamma-aminobutyric acid (GABA), a major inhibitory neurotransmitter in the brain. GABA-gated chloride channels, also named GABA(A) receptors (GABAAR), consist of five subunits arranged around a central pore and contain GABA active binding site(s) located at the alpha and beta subunit interface(s). Alpha-4/GABRA4 subunit often assembles with delta or gamma-2 subunits, in combination with beta subunits. When activated by GABA, GABAARs selectively allow the flow of chloride anions across the cell membrane down their electrochemical gradient. GABAARs containing alpha-4 are predominantly extrasynaptic, contributing to tonic inhibition in dentate granule cells and thalamic relay neurons. Extrasynaptic alpha-4-containing GABAARs control levels of excitability and network activity. GABAAR containing alpha-4-beta-3-delta subunits can simultaneously bind GABA and histamine where histamine binds at the interface of two neighboring beta subunits, which may be involved in the regulation of sleep and wakefulness. The protein is Gamma-aminobutyric acid receptor subunit alpha-4 of Mus musculus (Mouse).